Consider the following 422-residue polypeptide: Gamma-glutamyl phosphate reductase (422 aa).

Belongs to the gamma-glutamyl phosphate reductase family.

The protein resides in the cytoplasm. The catalysed reaction is L-glutamate 5-semialdehyde + phosphate + NADP(+) = L-glutamyl 5-phosphate + NADPH + H(+). It functions in the pathway amino-acid biosynthesis; L-proline biosynthesis; L-glutamate 5-semialdehyde from L-glutamate: step 2/2. Catalyzes the NADPH-dependent reduction of L-glutamate 5-phosphate into L-glutamate 5-semialdehyde and phosphate. The product spontaneously undergoes cyclization to form 1-pyrroline-5-carboxylate. This chain is Gamma-glutamyl phosphate reductase, found in Shewanella piezotolerans (strain WP3 / JCM 13877).